Consider the following 156-residue polypeptide: Small ribosomal subunit protein uS7 (156 aa).

This sequence belongs to the universal ribosomal protein uS7 family. Part of the 30S ribosomal subunit. Contacts proteins S9 and S11.

Its function is as follows. One of the primary rRNA binding proteins, it binds directly to 16S rRNA where it nucleates assembly of the head domain of the 30S subunit. Is located at the subunit interface close to the decoding center, probably blocks exit of the E-site tRNA. This Latilactobacillus sakei subsp. sakei (strain 23K) (Lactobacillus sakei subsp. sakei) protein is Small ribosomal subunit protein uS7.